A 258-amino-acid polypeptide reads, in one-letter code: Aspartate/glutamate leucyltransferase (258 aa).

It belongs to the R-transferase family. Bpt subfamily.

The protein resides in the cytoplasm. The enzyme catalyses N-terminal L-glutamyl-[protein] + L-leucyl-tRNA(Leu) = N-terminal L-leucyl-L-glutamyl-[protein] + tRNA(Leu) + H(+). The catalysed reaction is N-terminal L-aspartyl-[protein] + L-leucyl-tRNA(Leu) = N-terminal L-leucyl-L-aspartyl-[protein] + tRNA(Leu) + H(+). In terms of biological role, functions in the N-end rule pathway of protein degradation where it conjugates Leu from its aminoacyl-tRNA to the N-termini of proteins containing an N-terminal aspartate or glutamate. The chain is Aspartate/glutamate leucyltransferase from Bradyrhizobium diazoefficiens (strain JCM 10833 / BCRC 13528 / IAM 13628 / NBRC 14792 / USDA 110).